We begin with the raw amino-acid sequence, 284 residues long: 2-dehydro-3-deoxyphosphooctonate aldolase (284 aa).

This sequence belongs to the KdsA family.

It is found in the cytoplasm. The enzyme catalyses D-arabinose 5-phosphate + phosphoenolpyruvate + H2O = 3-deoxy-alpha-D-manno-2-octulosonate-8-phosphate + phosphate. It functions in the pathway carbohydrate biosynthesis; 3-deoxy-D-manno-octulosonate biosynthesis; 3-deoxy-D-manno-octulosonate from D-ribulose 5-phosphate: step 2/3. It participates in bacterial outer membrane biogenesis; lipopolysaccharide biosynthesis. The protein is 2-dehydro-3-deoxyphosphooctonate aldolase of Paraburkholderia xenovorans (strain LB400).